The sequence spans 471 residues: ATP synthase subunit beta (471 aa).

158-165 (GGAGCGKT) contributes to the ATP binding site.

The protein belongs to the ATPase alpha/beta chains family. In terms of assembly, F-type ATPases have 2 components, CF(1) - the catalytic core - and CF(0) - the membrane proton channel. CF(1) has five subunits: alpha(3), beta(3), gamma(1), delta(1), epsilon(1). CF(0) has three main subunits: a(1), b(2) and c(9-12). The alpha and beta chains form an alternating ring which encloses part of the gamma chain. CF(1) is attached to CF(0) by a central stalk formed by the gamma and epsilon chains, while a peripheral stalk is formed by the delta and b chains.

The protein localises to the cell inner membrane. The enzyme catalyses ATP + H2O + 4 H(+)(in) = ADP + phosphate + 5 H(+)(out). Produces ATP from ADP in the presence of a proton gradient across the membrane. The catalytic sites are hosted primarily by the beta subunits. This chain is ATP synthase subunit beta, found in Desulfotalea psychrophila (strain LSv54 / DSM 12343).